A 1727-amino-acid chain; its full sequence is Nucleoporin alm1 (1727 aa).

Coiled-coil stretches lie at residues 57–361, 443–463, 542–740, 804–1106, 1223–1427, 1497–1555, and 1601–1664; these read QEVN…KNTS, NFLSESLETSNNNLTKVQAEL, IKEA…AEEL, AARK…INES, GERS…QLNK, NEEE…AESA, and QKEW…KKDS. Positions 1423–1448 are enriched in polar residues; it reads EQLNKPSATPTATTQSEPSTVSLEEF. 3 disordered regions span residues 1423–1459, 1477–1500, and 1656–1727; these read EQLNKPSATPTATTQSEPSTVSLEEFNSTKEELSSTQ, EKVRQNSNKSEGTSKDTEIPNEEE, and LEQS…KKAK. Polar residues-rich tracts occupy residues 1672–1684 and 1702–1714; these read ASKNTDSNKSNSE and VDTNSPPKRSSSD. Residue S1706 is modified to Phosphoserine.

It is found in the nucleus. The protein resides in the nuclear pore complex. Its subcellular location is the nucleus envelope. Functionally, maintains the proteasome and its anchor cut8 at the nucleus envelope and is required for kinetochore component proteostasis. Proper kinetochore stoichiometry ensures the correct attachment of kinetochores to spindle microtubules during cytokinesis. Required for the localization of spindle assembly checkpoint (SAC) protein mad2 and bub1 to the nucleus envelope during interphase, but not their localization during mitosis. This Schizosaccharomyces pombe (strain 972 / ATCC 24843) (Fission yeast) protein is Nucleoporin alm1.